Consider the following 238-residue polypeptide: Probable transcriptional regulatory protein CF0838 (238 aa).

Belongs to the TACO1 family.

Its subcellular location is the cytoplasm. In Chlamydia felis (strain Fe/C-56) (Chlamydophila felis), this protein is Probable transcriptional regulatory protein CF0838.